Consider the following 324-residue polypeptide: NADH-ubiquinone oxidoreductase chain 1 (324 aa).

Transmembrane regions (helical) follow at residues 5-25, 75-95, 106-126, 146-166, 177-197, 228-248, 259-279, and 299-319; these read ILLYLINPLAYIVPILLATAF, FLFLATPTLALTLALLMWMPL, LGLLFILAVSSLTVYTILGSG, ISYEVSLGLILLSMIIFTGGF, TVWLLVPGWPLAMMWYISTLA, LFFLAEYTNILMMNTLSVILF, QISTFYLMMKATLLTLIFLWI, and FLPLTLALILWHAALPIATAS.

This sequence belongs to the complex I subunit 1 family.

The protein localises to the mitochondrion inner membrane. The catalysed reaction is a ubiquinone + NADH + 5 H(+)(in) = a ubiquinol + NAD(+) + 4 H(+)(out). Functionally, core subunit of the mitochondrial membrane respiratory chain NADH dehydrogenase (Complex I) that is believed to belong to the minimal assembly required for catalysis. Complex I functions in the transfer of electrons from NADH to the respiratory chain. The immediate electron acceptor for the enzyme is believed to be ubiquinone. This is NADH-ubiquinone oxidoreductase chain 1 (MT-ND1) from Squalus acanthias (Spiny dogfish).